Consider the following 431-residue polypeptide: Chaperone SurA (431 aa).

The first 20 residues, Met1–Ala20, serve as a signal peptide directing secretion. PpiC domains lie at Gly171–Asp272 and Val282–Asp382.

It is found in the periplasm. The catalysed reaction is [protein]-peptidylproline (omega=180) = [protein]-peptidylproline (omega=0). Its function is as follows. Chaperone involved in the correct folding and assembly of outer membrane proteins. Recognizes specific patterns of aromatic residues and the orientation of their side chains, which are found more frequently in integral outer membrane proteins. May act in both early periplasmic and late outer membrane-associated steps of protein maturation. In Sodalis glossinidius (strain morsitans), this protein is Chaperone SurA.